The chain runs to 331 residues: Hyaluronidase A (331 aa).

2 cysteine pairs are disulfide-bonded: Cys-19–Cys-308 and Cys-185–Cys-197. N-linked (GlcNAc...) asparagine glycosylation is found at Asn-79 and Asn-99. The Proton donor role is filled by Glu-109. Asn-127 carries an N-linked (GlcNAc...) asparagine glycan. N-linked (GlcNAc...) asparagine glycosylation is present at Asn-325.

It belongs to the glycosyl hydrolase 56 family. In terms of tissue distribution, expressed by the venom gland.

It localises to the secreted. The catalysed reaction is Random hydrolysis of (1-&gt;4)-linkages between N-acetyl-beta-D-glucosamine and D-glucuronate residues in hyaluronate.. Functionally, hydrolyzes high molecular weight hyaluronic acid to produce small oligosaccharides. This chain is Hyaluronidase A, found in Vespula vulgaris (Yellow jacket).